The following is an 878-amino-acid chain: Leucine--tRNA ligase (878 aa).

Residues 56–66 (PYPSGKLHMGH) carry the 'HIGH' region motif. The 'KMSKS' region motif lies at 630–634 (KMSKS). ATP is bound at residue lysine 633.

It belongs to the class-I aminoacyl-tRNA synthetase family.

Its subcellular location is the cytoplasm. It catalyses the reaction tRNA(Leu) + L-leucine + ATP = L-leucyl-tRNA(Leu) + AMP + diphosphate. The protein is Leucine--tRNA ligase of Prochlorococcus marinus (strain MIT 9303).